Here is a 554-residue protein sequence, read N- to C-terminus: Phosphomethylpyrimidine synthase (554 aa).

Residues Asn188, Met217, Tyr246, His282, 302–304 (SRG), 343–346 (DGLR), and Glu382 contribute to the substrate site. Residue His386 participates in Zn(2+) binding. Tyr409 contributes to the substrate binding site. Residue His450 coordinates Zn(2+). Residues Cys530, Cys533, and Cys538 each contribute to the [4Fe-4S] cluster site.

This sequence belongs to the ThiC family. In terms of assembly, homodimer. It depends on [4Fe-4S] cluster as a cofactor.

The catalysed reaction is 5-amino-1-(5-phospho-beta-D-ribosyl)imidazole + S-adenosyl-L-methionine = 4-amino-2-methyl-5-(phosphooxymethyl)pyrimidine + CO + 5'-deoxyadenosine + formate + L-methionine + 3 H(+). It participates in cofactor biosynthesis; thiamine diphosphate biosynthesis. Its function is as follows. Catalyzes the synthesis of the hydroxymethylpyrimidine phosphate (HMP-P) moiety of thiamine from aminoimidazole ribotide (AIR) in a radical S-adenosyl-L-methionine (SAM)-dependent reaction. The polypeptide is Phosphomethylpyrimidine synthase (Coxiella burnetii (strain Dugway 5J108-111)).